Reading from the N-terminus, the 249-residue chain is Probable WRKY transcription factor 64 (249 aa).

A DNA-binding region (WRKY) is located at residues 97-165 (SPTPRPDDGF…YLGKHVCKAV (69 aa)).

The protein belongs to the WRKY group III family.

It is found in the nucleus. Its function is as follows. Transcription factor. Interacts specifically with the W box (5'-(T)TGAC[CT]-3'), a frequently occurring elicitor-responsive cis-acting element. The chain is Probable WRKY transcription factor 64 (WRKY64) from Arabidopsis thaliana (Mouse-ear cress).